Here is a 122-residue protein sequence, read N- to C-terminus: NADH-quinone oxidoreductase subunit A (122 aa).

3 helical membrane-spanning segments follow: residues 10–30, 66–86, and 91–111; these read MIVL…LTLG, IFAL…PWAV, and LGLF…VGLA.

Belongs to the complex I subunit 3 family. In terms of assembly, NDH-1 is composed of 14 different subunits. Subunits NuoA, H, J, K, L, M, N constitute the membrane sector of the complex.

Its subcellular location is the cell membrane. It carries out the reaction a quinone + NADH + 5 H(+)(in) = a quinol + NAD(+) + 4 H(+)(out). Its function is as follows. NDH-1 shuttles electrons from NADH, via FMN and iron-sulfur (Fe-S) centers, to quinones in the respiratory chain. The immediate electron acceptor for the enzyme in this species is believed to be a menaquinone. Couples the redox reaction to proton translocation (for every two electrons transferred, four hydrogen ions are translocated across the cytoplasmic membrane), and thus conserves the redox energy in a proton gradient. This chain is NADH-quinone oxidoreductase subunit A, found in Bacillus anthracis.